We begin with the raw amino-acid sequence, 781 residues long: Toll-like receptor 2 type-2 (781 aa).

An N-terminal signal peptide occupies residues 1 to 24 (MHTWKMWAICTALAAHLPEEQALR). At 25-585 (QACLSCDATQ…QLSLMECHRS (561 aa)) the chain is on the extracellular side. Cysteine 30 and cysteine 36 are joined by a disulfide. A glycan (N-linked (GlcNAc...) asparagine) is linked at asparagine 37. 6 LRR repeats span residues 53 to 74 (KITV…DLQK), 77 to 98 (NLRT…SFGS), 101 to 122 (KLEL…WFGP), 125 to 146 (SLQH…SPFS), 150 to 171 (NLSS…NFEG), and 174 to 195 (FLNT…SLKS). Asparagine 109 carries an N-linked (GlcNAc...) asparagine glycan. N-linked (GlcNAc...) asparagine glycosylation is found at asparagine 150, asparagine 184, asparagine 301, and asparagine 313. Cysteine 350 and cysteine 379 are disulfide-bonded. LRR repeat units lie at residues 358 to 378 (SLEY…EHSA), 385 to 406 (SLQT…GKSL), 411 to 432 (NLNL…CEWP), 434 to 455 (NLKY…IPST), 456 to 474 (LEVL…LQLP), 475 to 496 (FLKE…TDIP), and 497 to 518 (NLVA…EFES). Asparagine 390 carries an N-linked (GlcNAc...) asparagine glycan. Cysteines 429 and 451 form a disulfide. The N-linked (GlcNAc...) asparagine glycan is linked to asparagine 439. An LRRCT domain is found at 530-584 (NNFICSCEFLSFIHHEAGIAQVLVGWPESYICDSPLTVRGAQVGSVQLSLMECHR). A helical membrane pass occupies residues 586-606 (LLVSLICTLVFLFILILVVVG). At 607-781 (YKYHAVWYMR…WENLKAALKS (175 aa)) the chain is on the cytoplasmic side. One can recognise a TIR domain in the interval 636–779 (ICYDAFVSYS…MFWENLKAAL (144 aa)).

Belongs to the Toll-like receptor family. Binds MYD88 (via TIR domain). N-glycosylated. Highly expressed in ovary. Also detected in brain, heart, lung, liver, spleen and kidney, and at low levels in gizzard, muscle, testis and proventriculus.

The protein resides in the membrane. In terms of biological role, participates in the innate immune response to microbial agents. Acts via MYD88 and TRAF6, leading to NF-kappa-B activation, cytokine secretion and the inflammatory response. Mediates the response to mycoplasmal macrophage-activating lipopeptide-2kD (MALP-2). The chain is Toll-like receptor 2 type-2 (TLR2-2) from Gallus gallus (Chicken).